A 414-amino-acid chain; its full sequence is Protein phosphatase 2C homolog 3 (414 aa).

Residues 23-288 (LYGLSSMQGW…DNMTVCIVAL (266 aa)) form the PPM-type phosphatase domain. Mn(2+)-binding residues include D62, G63, D230, and D279. 2 disordered regions span residues 313–368 (APPE…TNGS) and 380–414 (FPHK…SAAD). The segment covering 350–363 (GYDKDANENSKEDD) has biased composition (basic and acidic residues). Residues 390–400 (SSETDIVNSNK) show a composition bias toward polar residues. Residues 401-414 (DVADDHKEAVSAAD) show a composition bias toward basic and acidic residues.

Belongs to the PP2C family. As to quaternary structure, monomer. Mg(2+) serves as cofactor. It depends on Mn(2+) as a cofactor.

Its subcellular location is the cytoplasm. It localises to the nucleus. The catalysed reaction is O-phospho-L-seryl-[protein] + H2O = L-seryl-[protein] + phosphate. The enzyme catalyses O-phospho-L-threonyl-[protein] + H2O = L-threonyl-[protein] + phosphate. In terms of biological role, dephosphorylating regulator for many key proteins. Has an important role in osmotic stability and cell shape control. It may negatively regulate the osmosensing signal transmitted through wis1 map kinase. The sequence is that of Protein phosphatase 2C homolog 3 (ptc3) from Schizosaccharomyces pombe (strain 972 / ATCC 24843) (Fission yeast).